A 285-amino-acid polypeptide reads, in one-letter code: MILGVIYDLLRWEEKNLIQEARKLGHTVIPIYTKDFYYFYNNDSNETLGDLDVVIQRNTSHARAVITSTIFENLSYKTINDSSTLIKCENKLYTLSLLSKHGIRVPKTIVAFSKEKALELANKLSYPVVIKPVEGSWGRMVARAIDEDTLRNFLEYQEYTTLQFRYIYLIQEFVKKPDRDIRIFTIGDEAPVGIYRVNSRNWKTNTALGAKAEPLKIDEELQDLALKVKDIIGGFFLGIDVFEDPERGYIINEVNGVPEYKNTVRVNNFNVSEYLIRKIEEWIKK.

Residues Lys91, Lys131, 135–141, 171–182, Arg196, and Asn205 contribute to the ATP site; these read GSWGRMV and QEFVKKPDRDIR. The region spanning 95–280 is the ATP-grasp domain; the sequence is LSLLSKHGIR…VSEYLIRKIE (186 aa). Positions 240, 253, and 255 each coordinate Mg(2+). The short motif at 262-263 is the N-[TS] motif that is essential for LysX substrate specificity element; it reads NT.

It belongs to the RimK family. LysX subfamily. Homodimer. The cofactor is Mg(2+).

The enzyme catalyses [amino-group carrier protein]-C-terminal-L-glutamate + L-2-aminoadipate + ATP = [amino-group carrier protein]-C-terminal-N-(1,4-dicarboxybutan-1-yl)-L-glutamine + ADP + phosphate + H(+). It functions in the pathway amino-acid biosynthesis; L-lysine biosynthesis via AAA pathway; L-lysine from L-alpha-aminoadipate (Thermus route): step 1/5. In terms of biological role, catalyzes the ATP-dependent formation of a covalent bond between the amino group of alpha-aminoadipate (AAA) and the gamma-carboxyl group of the C-terminal glutamate residue in LysW. This chain is Alpha-aminoadipate--LysW ligase LysX (lysX), found in Sulfurisphaera tokodaii (strain DSM 16993 / JCM 10545 / NBRC 100140 / 7) (Sulfolobus tokodaii).